We begin with the raw amino-acid sequence, 347 residues long: MSVMFDPDTAIYPFPPKPTPLSIDEKAYYREKIKRLLKERNAVMVAHYYTDPEIQQLAEETGGCISDSLEMARFGAKHPASTLLVAGVRFMGETAKILSPEKTILMPTLQAECSLDLGCPVEEFNAFCDAHPDRTVVVYANTSAAVKARADWVVTSSIAVELIDHLDSLGEKIIWAPDKHLGRYVQKQTGADILCWQGACIVHDEFKTQALTRLQEEYPDAAILVHPESPQAIVDMADAVGSTSQLIAAAKTLPHQRLIVATDRGIFYKMQQAVPDKELLEAPTAGEGATCRSCAHCPWMAMNGLQAIAEALEQEGSNHEVHVDERLRERALVPLNRMLEFAATLRG.

Iminosuccinate-binding residues include His47 and Ser68. A [4Fe-4S] cluster-binding site is contributed by Cys113. Residues 139 to 141 (YAN) and Ser156 each bind iminosuccinate. Residue Cys200 participates in [4Fe-4S] cluster binding. Residues 226 to 228 (HPE) and Thr243 each bind iminosuccinate. Cys297 contributes to the [4Fe-4S] cluster binding site.

Belongs to the quinolinate synthase family. Type 1 subfamily. The cofactor is [4Fe-4S] cluster.

The protein resides in the cytoplasm. The enzyme catalyses iminosuccinate + dihydroxyacetone phosphate = quinolinate + phosphate + 2 H2O + H(+). The protein operates within cofactor biosynthesis; NAD(+) biosynthesis; quinolinate from iminoaspartate: step 1/1. Catalyzes the condensation of iminoaspartate with dihydroxyacetone phosphate to form quinolinate. This Escherichia coli O7:K1 (strain IAI39 / ExPEC) protein is Quinolinate synthase.